The sequence spans 228 residues: Aquaporin Z 2 (228 aa).

2 helical membrane-spanning segments follow: residues 9–29 and 34–54; these read FFGTFWLVFGGCGSAVFAAAF and IGFTGVALAFGLTVLTMAYAV. An NPA 1 motif is present at residues 63 to 65; sequence NPA. The next 3 helical transmembrane spans lie at 82–102, 129–149, and 158–178; these read VPYVIAQVAGAIVAAAALYVI, LVSALLIEIILTAFFLIVILG, and GFAPIAIGLALTLIHLISIPV. Positions 184–186 match the NPA 2 motif; that stretch reads NPA. Residues 204–224 form a helical membrane-spanning segment; sequence WLFWLAPIVGGAAGAVIWKLF.

It belongs to the MIP/aquaporin (TC 1.A.8) family. Homotetramer.

The protein resides in the cell inner membrane. The catalysed reaction is H2O(in) = H2O(out). Its function is as follows. Channel that permits osmotically driven movement of water in both directions. It is involved in the osmoregulation and in the maintenance of cell turgor during volume expansion in rapidly growing cells. It mediates rapid entry or exit of water in response to abrupt changes in osmolarity. The chain is Aquaporin Z 2 from Agrobacterium fabrum (strain C58 / ATCC 33970) (Agrobacterium tumefaciens (strain C58)).